The chain runs to 187 residues: Hypoxanthine/guanine phosphoribosyltransferase (187 aa).

It belongs to the purine/pyrimidine phosphoribosyltransferase family. Archaeal HPRT subfamily. In terms of assembly, homodimer.

It localises to the cytoplasm. The enzyme catalyses IMP + diphosphate = hypoxanthine + 5-phospho-alpha-D-ribose 1-diphosphate. It catalyses the reaction GMP + diphosphate = guanine + 5-phospho-alpha-D-ribose 1-diphosphate. The protein operates within purine metabolism; IMP biosynthesis via salvage pathway; IMP from hypoxanthine: step 1/1. Functionally, catalyzes a salvage reaction resulting in the formation of IMP that is energically less costly than de novo synthesis. The chain is Hypoxanthine/guanine phosphoribosyltransferase from Ferroglobus placidus (strain DSM 10642 / AEDII12DO).